Consider the following 121-residue polypeptide: Large ribosomal subunit protein uL24 (121 aa).

This sequence belongs to the universal ribosomal protein uL24 family. Part of the 50S ribosomal subunit.

Its function is as follows. One of two assembly initiator proteins, it binds directly to the 5'-end of the 23S rRNA, where it nucleates assembly of the 50S subunit. In terms of biological role, located at the polypeptide exit tunnel on the outside of the subunit. This Pyrococcus furiosus (strain ATCC 43587 / DSM 3638 / JCM 8422 / Vc1) protein is Large ribosomal subunit protein uL24.